Reading from the N-terminus, the 352-residue chain is S-adenosylmethionine:tRNA ribosyltransferase-isomerase (352 aa).

Belongs to the QueA family. Monomer.

It localises to the cytoplasm. It carries out the reaction 7-aminomethyl-7-carbaguanosine(34) in tRNA + S-adenosyl-L-methionine = epoxyqueuosine(34) in tRNA + adenine + L-methionine + 2 H(+). It participates in tRNA modification; tRNA-queuosine biosynthesis. In terms of biological role, transfers and isomerizes the ribose moiety from AdoMet to the 7-aminomethyl group of 7-deazaguanine (preQ1-tRNA) to give epoxyqueuosine (oQ-tRNA). This is S-adenosylmethionine:tRNA ribosyltransferase-isomerase from Allorhizobium ampelinum (strain ATCC BAA-846 / DSM 112012 / S4) (Agrobacterium vitis (strain S4)).